Here is a 369-residue protein sequence, read N- to C-terminus: 4beta-methylsterol monooxygenase (369 aa).

One can recognise a Rieske domain in the interval 29-135; the sequence is WYVVEIDGRL…VKAQWGLIWL (107 aa). The [2Fe-2S] cluster site is built by C70, H72, C89, and H92.

The cofactor is [2Fe-2S] cluster.

It carries out the reaction a 3beta-hydroxy-4,4-dimethylsteroid + 3 NADH + 3 O2 + 2 H(+) = a 3beta-hydroxy-4alpha-methylsteroid-4beta-carboxylate + 3 NAD(+) + 4 H2O. It catalyses the reaction 4,4-dimethyl-5alpha-cholesta-8,24-dien-3beta-ol + 3 NADH + 3 O2 + 2 H(+) = 4beta-carboxy-4alpha-methyl-5alpha-cholesta-8,24-dien-3beta-ol + 3 NAD(+) + 4 H2O. The catalysed reaction is a 3beta-hydroxy-4,4-dimethylsteroid + NADH + O2 + H(+) = a 3beta-hydroxy-4beta-hydroxymethyl-4alpha-methylsteroid + NAD(+) + H2O. The enzyme catalyses a 3beta-hydroxy-4beta-hydroxymethyl-4alpha-methylsteroid + NADH + O2 + H(+) = a 3beta-hydroxy-4beta-formyl-4alpha-methylsteroid + NAD(+) + 2 H2O. It carries out the reaction a 3beta-hydroxy-4beta-formyl-4alpha-methylsteroid + NADH + O2 = a 3beta-hydroxy-4alpha-methylsteroid-4beta-carboxylate + NAD(+) + H2O. It catalyses the reaction 4,4-dimethyl-5alpha-cholesta-8,24-dien-3beta-ol + NADH + O2 + H(+) = 4beta-hydroxymethyl-4alpha-methylzymosterol + NAD(+) + H2O. The catalysed reaction is 4beta-hydroxymethyl-4alpha-methylzymosterol + NADH + O2 + H(+) = 4beta-formylmethyl-4alpha-methyl-5alpha-cholesta-8,24-dien-3beta-ol + NAD(+) + 2 H2O. The enzyme catalyses 4beta-formylmethyl-4alpha-methyl-5alpha-cholesta-8,24-dien-3beta-ol + NADH + O2 = 4beta-carboxy-4alpha-methyl-5alpha-cholesta-8,24-dien-3beta-ol + NAD(+) + H2O. Its pathway is steroid biosynthesis; sterol biosynthesis. In terms of biological role, participates in the biosynthesis of bacterial sterols. Together with SdmB, removes one methyl group from the C-4 position of 4,4-dimethylated steroid molecules. SdmA oxidizes the sterol 4beta-methyl group into first a hydroxyl, then an aldehyde and finally a carboxylic acid group. The chain is 4beta-methylsterol monooxygenase from Methylococcus capsulatus (strain ATCC 33009 / NCIMB 11132 / Bath).